The following is a 384-amino-acid chain: Methylthioribose-1-phosphate isomerase (384 aa).

Residue Asp255 is the Proton donor of the active site.

The protein belongs to the eIF-2B alpha/beta/delta subunits family. MtnA subfamily.

It localises to the cytoplasm. The protein localises to the nucleus. It carries out the reaction 5-(methylsulfanyl)-alpha-D-ribose 1-phosphate = 5-(methylsulfanyl)-D-ribulose 1-phosphate. The protein operates within amino-acid biosynthesis; L-methionine biosynthesis via salvage pathway; L-methionine from S-methyl-5-thio-alpha-D-ribose 1-phosphate: step 1/6. Its function is as follows. Catalyzes the interconversion of methylthioribose-1-phosphate (MTR-1-P) into methylthioribulose-1-phosphate (MTRu-1-P). This is Methylthioribose-1-phosphate isomerase (mri1) from Talaromyces marneffei (strain ATCC 18224 / CBS 334.59 / QM 7333) (Penicillium marneffei).